Consider the following 507-residue polypeptide: ATP synthase subunit alpha, chloroplastic (507 aa).

170-177 (GDRQTGKT) contacts ATP. Thr-257 is modified (phosphothreonine).

This sequence belongs to the ATPase alpha/beta chains family. In terms of assembly, F-type ATPases have 2 components, CF(1) - the catalytic core - and CF(0) - the membrane proton channel. CF(1) has five subunits: alpha(3), beta(3), gamma(1), delta(1), epsilon(1). CF(0) has four main subunits: a, b, b' and c.

It localises to the plastid. The protein localises to the chloroplast thylakoid membrane. The catalysed reaction is ATP + H2O + 4 H(+)(in) = ADP + phosphate + 5 H(+)(out). In terms of biological role, produces ATP from ADP in the presence of a proton gradient across the membrane. The alpha chain is a regulatory subunit. The polypeptide is ATP synthase subunit alpha, chloroplastic (Aethionema cordifolium (Lebanon stonecress)).